Consider the following 62-residue polypeptide: Bacteriocin lactacin-F subunit LafX (62 aa).

Residues 1-14 constitute a propeptide that is removed on maturation; it reads MKLNDKELSKIVGG.

The protein belongs to the bacteriocin class IIB family. This bacteriocin depends upon the complementation of two peptides for activity: LafA and LafX. Associated with a 180 kDa bacteriocin complex.

Functionally, heat stable bacteriocin active against Enterococcus faecalis and other Lactobacilli. The chain is Bacteriocin lactacin-F subunit LafX (lafX) from Lactobacillus johnsonii (strain CNCM I-12250 / La1 / NCC 533).